The following is a 188-amino-acid chain: MFTAIWVMVGLAIAIGLILGWSAIRFKVEGNPLAEKIDAILPQTQCGQCGFPGCRPYAEAIAKGEADINQCPPGGEEGVKKLAELLGVEPKPLDEAHGTPKPKSVAFIDEQTCIGCTLCIQACPVDAISGAAKQMHTIIADECTGCELCLAPCPVDCISMVPIAEDLPHWKWKHPVVMMKQVGESTRV.

A hydrophobic region spans residues 1 to 23 (MFTAIWVMVGLAIAIGLILGWSA). The 4Fe-4S domain occupies 29 to 88 (EGNPLAEKIDAILPQTQCGQCGFPGCRPYAEAIAKGEADINQCPPGGEEGVKKLAELLGV). Residues cysteine 46, cysteine 49, cysteine 54, cysteine 71, cysteine 113, cysteine 116, cysteine 119, cysteine 123, cysteine 143, cysteine 146, cysteine 149, and cysteine 153 each coordinate [4Fe-4S] cluster. 2 consecutive 4Fe-4S ferredoxin-type domains span residues 104-133 (SVAF…GAAK) and 134-163 (QMHT…MVPI).

It belongs to the 4Fe4S bacterial-type ferredoxin family. RnfB subfamily. The complex is composed of six subunits: RnfA, RnfB, RnfC, RnfD, RnfE and RnfG. It depends on [4Fe-4S] cluster as a cofactor.

The protein resides in the cell inner membrane. Its function is as follows. Part of a membrane-bound complex that couples electron transfer with translocation of ions across the membrane. This Thiobacillus denitrificans (strain ATCC 25259 / T1) protein is Ion-translocating oxidoreductase complex subunit B.